Here is a 229-residue protein sequence, read N- to C-terminus: Histone H3-like centromeric protein CSE4 (229 aa).

Polar residues predominate over residues 1–35; sequence MSSKQQWVSSAIQSDSSGRSLSNVNRLAGDQQSIN. The segment at 1 to 78 is disordered; the sequence is MSSKQQWVSS…DIETDYEDQA (78 aa). Residues 53 to 68 show a composition bias toward basic and acidic residues; the sequence is PRREERRRYESSKSDL. The short motif at 115–132 is the Nuclear localization signal element; the sequence is KRREKQRKQSLKRVEKKY. Positions 132 to 229 are H3-like; the sequence is YTPSELALYE…LARRIRGQFI (98 aa).

Belongs to the histone H3 family. In terms of assembly, component of centromeric nucleosomes, where DNA is wrapped around a histone octamer core. The octamer contains two molecules each of H2A, H2B, CSE4/CENPA and H4 assembled in one CSE4-H4 heterotetramer and two H2A-H2B heterodimers. Interacts with the inner kinetochore. Interacts with the central kinetochore protein CTF19. Interacts with YTA7. Post-translationally, ubiquitinated. Is degraded through ubiquitin-mediated proteolysis when not protected by its association to the kinetochore.

The protein resides in the nucleus. It is found in the chromosome. The protein localises to the centromere. Histone H3-like nucleosomal protein that is specifically found in centromeric nucleosomes. Replaces conventional H3 in the nucleosome core of centromeric chromatin that serves as an assembly site for the inner kinetochore. Required for recruitment and assembly of kinetochore proteins, mitotic progression and chromosome segregation. May serve as an epigenetic mark that propagates centromere identity through replication and cell division. Required for functional chromatin architecture at the yeast 2-micron circle partitioning locus and promotes equal plasmid segregation. This chain is Histone H3-like centromeric protein CSE4 (CSE4), found in Saccharomyces cerevisiae (strain ATCC 204508 / S288c) (Baker's yeast).